The following is a 527-amino-acid chain: Phosphoenolpyruvate carboxykinase (ATP) (527 aa).

Residues Arg-56, Tyr-192, and Lys-198 each contribute to the substrate site. ATP contacts are provided by residues Lys-198, His-217, and 233–241 (GLSGTGKTT). Lys-198 and His-217 together coordinate Mn(2+). Asp-254 serves as a coordination point for Mn(2+). The ATP site is built by Glu-282, Arg-319, and Thr-444. Position 319 (Arg-319) interacts with substrate.

It belongs to the phosphoenolpyruvate carboxykinase (ATP) family. Requires Mn(2+) as cofactor.

It localises to the cytoplasm. It carries out the reaction oxaloacetate + ATP = phosphoenolpyruvate + ADP + CO2. The protein operates within carbohydrate biosynthesis; gluconeogenesis. Its function is as follows. Involved in the gluconeogenesis. Catalyzes the conversion of oxaloacetate (OAA) to phosphoenolpyruvate (PEP) through direct phosphoryl transfer between the nucleoside triphosphate and OAA. The chain is Phosphoenolpyruvate carboxykinase (ATP) from Bacillus velezensis (strain DSM 23117 / BGSC 10A6 / LMG 26770 / FZB42) (Bacillus amyloliquefaciens subsp. plantarum).